The following is a 544-amino-acid chain: Membrane protein insertase YidC (544 aa).

5 helical membrane passes run 13 to 33, 343 to 363, 409 to 429, 461 to 481, and 506 to 526; these read LSLF…SNIL, WGLS…PLTF, LGGC…YSLV, LYFV…FTQL, and MPIM…IYWI.

This sequence belongs to the OXA1/ALB3/YidC family. Type 1 subfamily. Interacts with the Sec translocase complex via SecD. Specifically interacts with transmembrane segments of nascent integral membrane proteins during membrane integration.

The protein localises to the cell inner membrane. Functionally, required for the insertion and/or proper folding and/or complex formation of integral membrane proteins into the membrane. Involved in integration of membrane proteins that insert both dependently and independently of the Sec translocase complex, as well as at least some lipoproteins. Aids folding of multispanning membrane proteins. The protein is Membrane protein insertase YidC of Borreliella burgdorferi (strain ZS7) (Borrelia burgdorferi).